The sequence spans 377 residues: MALQGWVQRGWRCGPAWAPPLGGGYRELSATQAPRLLGRRFNLFVQQKCGFRKAPRKVEPRRSDTGSSGEAYKRSALIPPLEETVFYPSPYPIRTLVKPFFFTIGFTGCAFGSAAIWQYESLKSRVQSYFDGIKADWLDSIRPQKEGNLRKEINKWWNSLSDGQRTVTGIIAANALVFCLWRVPSLQRTMIRYFTSNPASKVLCSPMLLSTFSHFSLFHMAANMYVLWSFSSSIVNILGQEQFVAVYLSAGVISNFVSYVCKVATGRYGPSLGASGAIMTVLAAVCTKIPEGRLAIIFLPVFTFTAGNALKAIIAMDTAGMILGWKFFDHAAHLGGALFGIWYITYGHELIWKNREPLVKIWHEIRTNGPKKGGGSK.

A mitochondrion-targeting transit peptide spans 1–50 (MALQGWVQRGWRCGPAWAPPLGGGYRELSATQAPRLLGRRFNLFVQQKCG). Over 51-99 (FRKAPRKVEPRRSDTGSSGEAYKRSALIPPLEETVFYPSPYPIRTLVKP) the chain is Mitochondrial matrix. Residues serine 63 and serine 68 each carry the phosphoserine modification. A helical membrane pass occupies residues 100-119 (FFFTIGFTGCAFGSAAIWQY). Over 120–165 (ESLKSRVQSYFDGIKADWLDSIRPQKEGNLRKEINKWWNSLSDGQR) the chain is Mitochondrial intermembrane. The helical transmembrane segment at 166–185 (TVTGIIAANALVFCLWRVPS) threads the bilayer. Topologically, residues 186 to 205 (LQRTMIRYFTSNPASKVLCS) are mitochondrial matrix. Residues 206-228 (PMLLSTFSHFSLFHMAANMYVLW) traverse the membrane as a helical segment. Residues 229–242 (SFSSSIVNILGQEQ) lie on the Mitochondrial intermembrane side of the membrane. A helical transmembrane segment spans residues 243–260 (FVAVYLSAGVISNFVSYV). Residues 261–270 (CKVATGRYGP) are Mitochondrial matrix-facing. Residues 271-287 (SLGASGAIMTVLAAVCT) form a helical membrane-spanning segment. Serine 275 (nucleophile) is an active-site residue. Residues 288–293 (KIPEGR) are Mitochondrial intermembrane-facing. The helical transmembrane segment at 294 to 316 (LAIIFLPVFTFTAGNALKAIIAM) threads the bilayer. The Mitochondrial matrix portion of the chain corresponds to 317 to 330 (DTAGMILGWKFFDH). A helical transmembrane segment spans residues 331–352 (AAHLGGALFGIWYITYGHELIW). Histidine 333 is an active-site residue. The Mitochondrial intermembrane portion of the chain corresponds to 353 to 377 (KNREPLVKIWHEIRTNGPKKGGGSK).

The protein belongs to the peptidase S54 family. Interacts with PSEN1 and PSEN2. Binds OPA1. Post-translationally, P-beta is proteolytically processed (beta-cleavage) in a PARL-dependent manner.

It is found in the mitochondrion inner membrane. The protein localises to the nucleus. The catalysed reaction is Cleaves type-1 transmembrane domains using a catalytic dyad composed of serine and histidine that are contributed by different transmembrane domains.. Functionally, required for the control of apoptosis during postnatal growth. Essential for proteolytic processing of an antiapoptotic form of OPA1 which prevents the release of mitochondrial cytochrome c in response to intrinsic apoptotic signals. Required for the maturation of PINK1 into its 52kDa mature form after its cleavage by mitochondrial-processing peptidase (MPP). Promotes cleavage of serine/threonine-protein phosphatase PGAM5 in damaged mitochondria in response to loss of mitochondrial membrane potential. Mediates differential cleavage of PINK1 and PGAM5 depending on the health status of mitochondria, disassociating from PINK1 and associating with PGAM5 in response to mitochondrial membrane potential loss. Required for processing of CLPB into a form with higher protein disaggregase activity by removing an autoinhibitory N-terminal peptide. Promotes processing of DIABLO/SMAC in the mitochondrion which is required for DIABLO apoptotic activity. Also required for cleavage of STARD7 and TTC19. Promotes changes in mitochondria morphology regulated by phosphorylation of P-beta domain. The sequence is that of Presenilin-associated rhomboid-like protein, mitochondrial (Parl) from Mus musculus (Mouse).